The sequence spans 457 residues: tRNA modification GTPase MnmE (457 aa).

3 residues coordinate (6S)-5-formyl-5,6,7,8-tetrahydrofolate: R25, E87, and R126. In terms of domain architecture, TrmE-type G spans 223 to 377; the sequence is GISTAIIGRP…IEERINNLFF (155 aa). N233 serves as a coordination point for K(+). GTP-binding positions include 233–238, 252–258, and 277–280; these read NVGKSS, TDIAGTT, and DTAG. S237 is a binding site for Mg(2+). T252, I254, and T257 together coordinate K(+). T258 provides a ligand contact to Mg(2+). K457 is a binding site for (6S)-5-formyl-5,6,7,8-tetrahydrofolate.

This sequence belongs to the TRAFAC class TrmE-Era-EngA-EngB-Septin-like GTPase superfamily. TrmE GTPase family. In terms of assembly, homodimer. Heterotetramer of two MnmE and two MnmG subunits. It depends on K(+) as a cofactor.

The protein localises to the cytoplasm. Exhibits a very high intrinsic GTPase hydrolysis rate. Involved in the addition of a carboxymethylaminomethyl (cmnm) group at the wobble position (U34) of certain tRNAs, forming tRNA-cmnm(5)s(2)U34. The chain is tRNA modification GTPase MnmE from Streptococcus pneumoniae serotype 4 (strain ATCC BAA-334 / TIGR4).